Here is a 195-residue protein sequence, read N- to C-terminus: Imidazoleglycerol-phosphate dehydratase (195 aa).

It belongs to the imidazoleglycerol-phosphate dehydratase family.

It is found in the cytoplasm. It catalyses the reaction D-erythro-1-(imidazol-4-yl)glycerol 3-phosphate = 3-(imidazol-4-yl)-2-oxopropyl phosphate + H2O. It functions in the pathway amino-acid biosynthesis; L-histidine biosynthesis; L-histidine from 5-phospho-alpha-D-ribose 1-diphosphate: step 6/9. In Cupriavidus pinatubonensis (strain JMP 134 / LMG 1197) (Cupriavidus necator (strain JMP 134)), this protein is Imidazoleglycerol-phosphate dehydratase.